Reading from the N-terminus, the 304-residue chain is Sulfate adenylyltransferase subunit 2 (304 aa).

This sequence belongs to the PAPS reductase family. CysD subfamily. In terms of assembly, heterodimer composed of CysD, the smaller subunit, and CysNC.

The catalysed reaction is sulfate + ATP + H(+) = adenosine 5'-phosphosulfate + diphosphate. It participates in sulfur metabolism; hydrogen sulfide biosynthesis; sulfite from sulfate: step 1/3. With CysN forms the ATP sulfurylase (ATPS) that catalyzes the adenylation of sulfate producing adenosine 5'-phosphosulfate (APS) and diphosphate, the first enzymatic step in sulfur assimilation pathway. APS synthesis involves the formation of a high-energy phosphoric-sulfuric acid anhydride bond driven by GTP hydrolysis by CysN coupled to ATP hydrolysis by CysD. This chain is Sulfate adenylyltransferase subunit 2, found in Xylella fastidiosa (strain Temecula1 / ATCC 700964).